Here is a 296-residue protein sequence, read N- to C-terminus: 4-hydroxy-tetrahydrodipicolinate synthase (296 aa).

Threonine 47 is a binding site for pyruvate. The active-site Proton donor/acceptor is tyrosine 136. Lysine 164 acts as the Schiff-base intermediate with substrate in catalysis. Valine 206 provides a ligand contact to pyruvate.

The protein belongs to the DapA family. In terms of assembly, homotetramer; dimer of dimers.

It is found in the cytoplasm. It catalyses the reaction L-aspartate 4-semialdehyde + pyruvate = (2S,4S)-4-hydroxy-2,3,4,5-tetrahydrodipicolinate + H2O + H(+). It functions in the pathway amino-acid biosynthesis; L-lysine biosynthesis via DAP pathway; (S)-tetrahydrodipicolinate from L-aspartate: step 3/4. Catalyzes the condensation of (S)-aspartate-beta-semialdehyde [(S)-ASA] and pyruvate to 4-hydroxy-tetrahydrodipicolinate (HTPA). The chain is 4-hydroxy-tetrahydrodipicolinate synthase from Thermosynechococcus vestitus (strain NIES-2133 / IAM M-273 / BP-1).